A 349-amino-acid polypeptide reads, in one-letter code: Phosphoribosylformylglycinamidine cyclo-ligase (349 aa).

The protein belongs to the AIR synthase family.

The protein localises to the cytoplasm. The enzyme catalyses 2-formamido-N(1)-(5-O-phospho-beta-D-ribosyl)acetamidine + ATP = 5-amino-1-(5-phospho-beta-D-ribosyl)imidazole + ADP + phosphate + H(+). It participates in purine metabolism; IMP biosynthesis via de novo pathway; 5-amino-1-(5-phospho-D-ribosyl)imidazole from N(2)-formyl-N(1)-(5-phospho-D-ribosyl)glycinamide: step 2/2. This chain is Phosphoribosylformylglycinamidine cyclo-ligase, found in Listeria monocytogenes serotype 4a (strain HCC23).